The following is a 393-amino-acid chain: Beta-1,4-galactosyltransferase 3 (393 aa).

Topologically, residues 1 to 10 (MLRRLLERPC) are cytoplasmic. A helical; Signal-anchor for type II membrane protein transmembrane segment spans residues 11-31 (TLALLVGSQLAVMMYLSLGGF). Residues 32–393 (RSLSALFGRD…ANHTALRGSH (362 aa)) are Lumenal-facing. N-linked (GlcNAc...) asparagine glycosylation is present at N57. The cysteines at positions 77 and 119 are disulfide-linked. UDP-alpha-D-galactose is bound at residue 130–134 (PHRAR). An N-linked (GlcNAc...) asparagine glycan is attached at N166. UDP-alpha-D-galactose-binding positions include 169–171 (FNR), 196–197 (VD), Y226, and W258. C190 and C209 are disulfide-bonded. D197 contacts Mn(2+). Residue 260 to 263 (GEDD) coordinates N-acetyl-D-glucosamine. Mn(2+) is bound at residue H291. Residue 291–293 (HRG) participates in UDP-alpha-D-galactose binding. R303 contacts N-acetyl-D-glucosamine. Residues N337 and N385 are each glycosylated (N-linked (GlcNAc...) asparagine). Residues 339-393 (TADIGTDPRGPRAPSGPRYPPGSSQAFRQEMLQRRPPARPGPPPTANHTALRGSH) form a disordered region.

The protein belongs to the glycosyltransferase 7 family. It depends on Mn(2+) as a cofactor.

The protein localises to the golgi apparatus. It is found in the golgi stack membrane. It catalyses the reaction an N-acetyl-beta-D-glucosaminyl derivative + UDP-alpha-D-galactose = a beta-D-galactosyl-(1-&gt;4)-N-acetyl-beta-D-glucosaminyl derivative + UDP + H(+). The enzyme catalyses N-acetyl-D-glucosamine + UDP-alpha-D-galactose = beta-D-galactosyl-(1-&gt;4)-N-acetyl-D-glucosamine + UDP + H(+). It carries out the reaction a beta-D-GlcNAc-(1-&gt;3)-beta-D-Gal-(1-&gt;4)-beta-D-Glc-(1&lt;-&gt;1)-Cer(d18:1(4E)) + UDP-alpha-D-galactose = a neolactoside nLc4Cer(d18:1(4E)) + UDP + H(+). The catalysed reaction is a beta-D-glucosylceramide + UDP-alpha-D-galactose = a beta-D-galactosyl-(1-&gt;4)-beta-D-glucosyl-(1&lt;-&gt;1)-ceramide + UDP + H(+). It catalyses the reaction a neolactoside IV(3)-beta-GlcNAc-nLc4Cer + UDP-alpha-D-galactose = a neolactoside nLc6Cer + UDP + H(+). It participates in protein modification; protein glycosylation. Its function is as follows. Responsible for the synthesis of complex-type N-linked oligosaccharides in many glycoproteins as well as the carbohydrate moieties of glycolipids. This chain is Beta-1,4-galactosyltransferase 3 (B4GALT3), found in Pongo abelii (Sumatran orangutan).